A 267-amino-acid polypeptide reads, in one-letter code: Undecaprenyl-diphosphatase (267 aa).

Helical transmembrane passes span 1-21 (MTLF…FLPV), 40-60 (GLAI…LYFW), 83-103 (AFLA…GLII), 111-131 (MMRS…VLYW), 144-164 (GWTL…LIPG), 189-209 (AMLM…ADVI), 219-239 (DGAL…ALMM), and 245-265 (VSFT…LVYA).

It belongs to the UppP family.

Its subcellular location is the cell inner membrane. The catalysed reaction is di-trans,octa-cis-undecaprenyl diphosphate + H2O = di-trans,octa-cis-undecaprenyl phosphate + phosphate + H(+). Functionally, catalyzes the dephosphorylation of undecaprenyl diphosphate (UPP). Confers resistance to bacitracin. This chain is Undecaprenyl-diphosphatase, found in Roseobacter denitrificans (strain ATCC 33942 / OCh 114) (Erythrobacter sp. (strain OCh 114)).